A 381-amino-acid chain; its full sequence is Alkanesulfonate monooxygenase (381 aa).

Belongs to the SsuD family. Homotetramer.

The catalysed reaction is an alkanesulfonate + FMNH2 + O2 = an aldehyde + FMN + sulfite + H2O + 2 H(+). In terms of biological role, catalyzes the desulfonation of aliphatic sulfonates. The sequence is that of Alkanesulfonate monooxygenase from Shigella flexneri serotype 5b (strain 8401).